The primary structure comprises 489 residues: Glycogen synthase (489 aa).

K17 provides a ligand contact to ADP-alpha-D-glucose.

The protein belongs to the glycosyltransferase 1 family. Bacterial/plant glycogen synthase subfamily.

It carries out the reaction [(1-&gt;4)-alpha-D-glucosyl](n) + ADP-alpha-D-glucose = [(1-&gt;4)-alpha-D-glucosyl](n+1) + ADP + H(+). It participates in glycan biosynthesis; glycogen biosynthesis. Functionally, synthesizes alpha-1,4-glucan chains using ADP-glucose. In Nitratidesulfovibrio vulgaris (strain ATCC 29579 / DSM 644 / CCUG 34227 / NCIMB 8303 / VKM B-1760 / Hildenborough) (Desulfovibrio vulgaris), this protein is Glycogen synthase.